The primary structure comprises 252 residues: 5'-nucleotidase SurE (252 aa).

Positions 8, 9, 39, and 95 each coordinate a divalent metal cation.

This sequence belongs to the SurE nucleotidase family. It depends on a divalent metal cation as a cofactor.

It is found in the cytoplasm. The catalysed reaction is a ribonucleoside 5'-phosphate + H2O = a ribonucleoside + phosphate. In terms of biological role, nucleotidase that shows phosphatase activity on nucleoside 5'-monophosphates. This is 5'-nucleotidase SurE from Clostridium botulinum (strain ATCC 19397 / Type A).